Consider the following 476-residue polypeptide: MVKLIHTLADHGDDVNCCAFSFSLLATCSLDKTIRLYSLRDFTELPHSPLKFHTYAVHCCCFSPSGHILASCSTDGTTVLWNTENGQMLAVMEQPSGSPVRVCQFSPDSTCLASGAADGTVVLWNAQSYKLYRCGSVKDGSLAACAFSPNGSFFVTGSSCGDLTVWDDKMRCLHSEKAHDLGITCCDFSSQPVSDGEQGLQFFRLASCGQDCQVKIWIVSFTHILGFELKYKSTLSGHCAPVLACAFSHDGQMLVSGSVDKSVIVYDTNTENILHTLTQHTRYVTTCAFAPNTLLLATGSMDKTVNIWQFDLETLCQARRTEHQLKQFTEDWSEEDVSTWLCAQDLKDLVGIFKMNNIDGKELLNLTKESLADDLKIESLGLRSKVLRKIEELRTKVKSLSSGIPDEFICPITRELMKDPVIASDGYSYEKEAMENWISKKKRTSPMTNLVLPSAVLTPNRTLKMAINRWLETHQK.

7 WD repeats span residues aspartate 10–histidine 47, phenylalanine 52–valine 91, proline 95–cysteine 134, valine 137–glutamate 176, alanine 178–glutamate 228, glycine 237–threonine 276, and glutamine 279–alanine 318. In terms of domain architecture, SAM spans tryptophan 332 to lysine 396. A U-box domain is found at glycine 403 to lysine 476. A Phosphothreonine modification is found at threonine 458.

The chain is WD repeat, SAM and U-box domain-containing protein 1 (WDSUB1) from Homo sapiens (Human).